Reading from the N-terminus, the 220-residue chain is Uracil-DNA glycosylase (220 aa).

D60 functions as the Proton acceptor in the catalytic mechanism.

Belongs to the uracil-DNA glycosylase (UDG) superfamily. UNG family.

The protein localises to the cytoplasm. The catalysed reaction is Hydrolyzes single-stranded DNA or mismatched double-stranded DNA and polynucleotides, releasing free uracil.. In terms of biological role, excises uracil residues from the DNA which can arise as a result of misincorporation of dUMP residues by DNA polymerase or due to deamination of cytosine. This Francisella tularensis subsp. holarctica (strain FTNF002-00 / FTA) protein is Uracil-DNA glycosylase.